A 300-amino-acid polypeptide reads, in one-letter code: Zinc finger CCCH domain-containing protein 14 (300 aa).

The segment at 1–38 (MEVGGRKRGKPDGANGAGGKRARESESFQTGVGSKSKP) is disordered. 2 consecutive C3H1-type zinc fingers follow at residues 33–61 (GSKSKPCTKFFSTSGCPFGEGCHFLHHFP) and 99–127 (TVKTRLCNKYNTAEGCKWGDKCHFAHGER). Residues 170 to 234 (SATAKISVDA…DQIKNASAMV (65 aa)) enclose the KH domain. Residues 243-262 (GGAPPQGKKPVGGSHRGGGP) are disordered. The segment at 265–292 (NFKTKLCENFTKGSCTFGDRCHFAHGEN) adopts a C3H1-type 3 zinc-finger fold.

This Oryza sativa subsp. japonica (Rice) protein is Zinc finger CCCH domain-containing protein 14.